Consider the following 541-residue polypeptide: Amino-acid permease 2 (541 aa).

The segment covering 1-22 has biased composition (polar residues); that stretch reads MSFSPPNKSADATIQITEMTRQ. The interval 1–43 is disordered; it reads MSFSPPNKSADATIQITEMTRQGTPSSGEAAASTPSTSSTESG. The span at 23–41 shows a compositional bias: low complexity; the sequence is GTPSSGEAAASTPSTSSTE. 12 consecutive transmembrane segments (helical) span residues 66–86, 90–110, 139–159, 188–208, 214–234, 255–275, 301–321, 347–367, 399–419, 424–444, 464–484, and 496–516; these read FSFA…WIYG, GGAA…WALA, VPFL…AGGA, VVGV…LPTA, TSGY…TLLV, GWSP…WIMT, ATTF…VCMG, PAIF…IPGI, PLIA…LGLA, IGAV…IPII, VWVN…FFFP, and YAIV…YTHG.

It belongs to the amino acid-polyamine-organocation (APC) superfamily.

Its subcellular location is the membrane. This is Amino-acid permease 2 (aap-2) from Neurospora crassa (strain ATCC 24698 / 74-OR23-1A / CBS 708.71 / DSM 1257 / FGSC 987).